Reading from the N-terminus, the 158-residue chain is Small ribosomal subunit protein uS17 (158 aa).

Ala-2 is subject to N-acetylalanine. Citrulline is present on Arg-22. Residues Lys-38, Lys-45, and Lys-58 each carry the N6-acetyllysine modification. Cys-60 is lipidated: S-palmitoyl cysteine. Ser-67 is subject to Phosphoserine. Arg-69 carries the post-translational modification Omega-N-methylarginine. Ser-110 is subject to Phosphoserine.

Belongs to the universal ribosomal protein uS17 family. As to quaternary structure, component of the small ribosomal subunit. Part of the small subunit (SSU) processome, composed of more than 70 proteins and the RNA chaperone small nucleolar RNA (snoRNA) U3. Post-translationally, citrullinated by PADI4.

The protein localises to the cytoplasm. The protein resides in the nucleus. It is found in the nucleolus. Its function is as follows. Component of the small ribosomal subunit. The ribosome is a large ribonucleoprotein complex responsible for the synthesis of proteins in the cell. Part of the small subunit (SSU) processome, first precursor of the small eukaryotic ribosomal subunit. During the assembly of the SSU processome in the nucleolus, many ribosome biogenesis factors, an RNA chaperone and ribosomal proteins associate with the nascent pre-rRNA and work in concert to generate RNA folding, modifications, rearrangements and cleavage as well as targeted degradation of pre-ribosomal RNA by the RNA exosome. The protein is Small ribosomal subunit protein uS17 (Rps11) of Mus musculus (Mouse).